Consider the following 551-residue polypeptide: Putative hydroxymethylpyrimidine/phosphomethylpyrimidine kinase 2 (551 aa).

Glutamate 76 contributes to the 4-amino-5-hydroxymethyl-2-methylpyrimidine binding site.

This sequence in the N-terminal section; belongs to the ThiD family. It in the C-terminal section; belongs to the thiaminase-2 family.

It is found in the cytoplasm. It carries out the reaction 4-amino-5-hydroxymethyl-2-methylpyrimidine + ATP = 4-amino-2-methyl-5-(phosphooxymethyl)pyrimidine + ADP + H(+). The enzyme catalyses 4-amino-2-methyl-5-(phosphooxymethyl)pyrimidine + ATP = 4-amino-2-methyl-5-(diphosphooxymethyl)pyrimidine + ADP. The protein operates within cofactor biosynthesis; thiamine diphosphate biosynthesis; 4-amino-2-methyl-5-diphosphomethylpyrimidine from 5-amino-1-(5-phospho-D-ribosyl)imidazole: step 2/3. It functions in the pathway cofactor biosynthesis; thiamine diphosphate biosynthesis; 4-amino-2-methyl-5-diphosphomethylpyrimidine from 5-amino-1-(5-phospho-D-ribosyl)imidazole: step 3/3. Functionally, catalyzes the phosphorylation of hydroxymethylpyrimidine phosphate (HMP-P) to HMP-PP, and of HMP to HMP-P. This chain is Putative hydroxymethylpyrimidine/phosphomethylpyrimidine kinase 2, found in Schizosaccharomyces pombe (strain 972 / ATCC 24843) (Fission yeast).